The chain runs to 778 residues: LPS-assembly protein LptD (778 aa).

Residues 1 to 23 (MKTRYSVLSVAMTAAFYTQYAQA) form the signal peptide.

Belongs to the LptD family. Component of the lipopolysaccharide transport and assembly complex. Interacts with LptE and LptA.

It localises to the cell outer membrane. Its function is as follows. Together with LptE, is involved in the assembly of lipopolysaccharide (LPS) at the surface of the outer membrane. In Actinobacillus pleuropneumoniae serotype 5b (strain L20), this protein is LPS-assembly protein LptD.